The following is a 199-amino-acid chain: Pyridoxine/pyridoxamine 5'-phosphate oxidase (199 aa).

Residues 44 to 49 (RTVLLK), 59 to 60 (YT), K66, and Q91 contribute to the FMN site. Residue K49 participates in substrate binding. Substrate is bound by residues Y109, R113, and S117. FMN is bound by residues 126-127 (QS) and W171. 177–179 (RLH) contacts substrate. Residue R181 participates in FMN binding.

It belongs to the pyridoxamine 5'-phosphate oxidase family. Homodimer. FMN is required as a cofactor.

It catalyses the reaction pyridoxamine 5'-phosphate + O2 + H2O = pyridoxal 5'-phosphate + H2O2 + NH4(+). The enzyme catalyses pyridoxine 5'-phosphate + O2 = pyridoxal 5'-phosphate + H2O2. It participates in cofactor metabolism; pyridoxal 5'-phosphate salvage; pyridoxal 5'-phosphate from pyridoxamine 5'-phosphate: step 1/1. The protein operates within cofactor metabolism; pyridoxal 5'-phosphate salvage; pyridoxal 5'-phosphate from pyridoxine 5'-phosphate: step 1/1. Its function is as follows. Catalyzes the oxidation of either pyridoxine 5'-phosphate (PNP) or pyridoxamine 5'-phosphate (PMP) into pyridoxal 5'-phosphate (PLP). This is Pyridoxine/pyridoxamine 5'-phosphate oxidase from Xanthomonas axonopodis pv. citri (strain 306).